The following is a 312-amino-acid chain: F-box protein At1g11270 (312 aa).

Positions 29-80 constitute an F-box domain; the sequence is SVVKLLLPHDVVGLILERLPVESLLRFKCVSNQWKSTIESQCFQERQLIRRM.

This Arabidopsis thaliana (Mouse-ear cress) protein is F-box protein At1g11270.